A 178-amino-acid chain; its full sequence is Caveolin-1 (178 aa).

At Ser-2 the chain carries N-acetylserine. The residue at position 2 (Ser-2) is a Phosphoserine. A required for homooligomerization region spans residues 2–94 (SGGKYVDSEG…WKASFTTFTV (93 aa)). Residues 2–104 (SGGKYVDSEG…TKYWFYRLLS (103 aa)) are Cytoplasmic-facing. At Lys-5 the chain carries N6-acetyllysine; alternate. A Glycyl lysine isopeptide (Lys-Gly) (interchain with G-Cter in ubiquitin); alternate cross-link involves residue Lys-5. Tyr-6 bears the Phosphotyrosine mark. At Ser-9 the chain carries Phosphoserine. Tyr-14 bears the Phosphotyrosine; by ABL1 mark. Tyr-25 carries the phosphotyrosine modification. Glycyl lysine isopeptide (Lys-Gly) (interchain with G-Cter in ubiquitin) cross-links involve residues Lys-26, Lys-30, Lys-39, Lys-47, and Lys-57. Positions 82–94 (DGIWKASFTTFTV) are interaction with CAVIN3. Residues 105 to 125 (ALFGIPMALIWGIYFAILSFL) constitute an intramembrane region (helical). At 126–178 (HIWAVVPCIKSFLIEIQCISRVYSIYVHTFCDPLFEAIGKIFSNVRINLQKEI) the chain is on the cytoplasmic side. Residues 131-142 (VPCIKSFLIEIQ) are interacts with SPRY1, SPRY2, SPRY3 and SPRY4. 3 S-palmitoyl cysteine lipidation sites follow: Cys-133, Cys-143, and Cys-156. The tract at residues 149 to 160 (SIYVHTFCDPLF) is interacts with SPRY1, SPRY2, and SPRY4. The tract at residues 167-178 (FSNVRINLQKEI) is interacts with SPRY1, SPRY2, SPRY3 and SPRY4.

It belongs to the caveolin family. In terms of assembly, homooligomer. Interacts with GLIPR2. Interacts with NOSTRIN. Interacts with SNAP25 and STX1A. Interacts (via the N-terminus) with DPP4; the interaction is direct. Interacts with CTNNB1, CDH1 and JUP. Interacts with PACSIN2; this interaction induces membrane tubulation. Interacts with SLC7A9. Interacts with BMX and BTK. Interacts with TGFBR1. Interacts with CAVIN3 (via leucine-zipper domain) in a cholesterol-sensitive manner. Interacts with CAVIN1. Interacts with EHD2 in a cholesterol-dependent manner. Forms a ternary complex with UBXN6 and VCP; mediates CAV1 targeting to lysosomes for degradation. Interacts with ABCG1; this interaction regulates ABCG1-mediated cholesterol efflux. Interacts with NEU3; this interaction enhances NEU3 sialidase activity within caveola. Interacts (via C-terminus) with SPRY1, SPRY2 (via C-terminus), SPRY3, and SPRY4. Interacts with IGFBP5; this interaction allows trafficking of IGFBP5 from the plasma membrane to the nucleus. Post-translationally, phosphorylated at Tyr-14 by ABL1 in response to oxidative stress. Ubiquitinated. Undergo monoubiquitination and multi- and/or polyubiquitination. Monoubiquitination of N-terminal lysines promotes integration in a ternary complex with UBXN6 and VCP which promotes oligomeric CAV1 targeting to lysosomes for degradation. Ubiquitinated by ZNRF1; leading to degradation and modulation of the TLR4-mediated immune response.

It localises to the golgi apparatus membrane. The protein resides in the cell membrane. The protein localises to the membrane. It is found in the caveola. Its subcellular location is the membrane raft. In terms of biological role, may act as a scaffolding protein within caveolar membranes. Forms a stable heterooligomeric complex with CAV2 that targets to lipid rafts and drives caveolae formation. Mediates the recruitment of CAVIN proteins (CAVIN1/2/3/4) to the caveolae. Interacts directly with G-protein alpha subunits and can functionally regulate their activity. Involved in the costimulatory signal essential for T-cell receptor (TCR)-mediated T-cell activation. Its binding to DPP4 induces T-cell proliferation and NF-kappa-B activation in a T-cell receptor/CD3-dependent manner. Recruits CTNNB1 to caveolar membranes and may regulate CTNNB1-mediated signaling through the Wnt pathway. Negatively regulates TGFB1-mediated activation of SMAD2/3 by mediating the internalization of TGFBR1 from membrane rafts leading to its subsequent degradation. Binds 20(S)-hydroxycholesterol (20(S)-OHC). The sequence is that of Caveolin-1 (CAV1) from Equus caballus (Horse).